A 376-amino-acid polypeptide reads, in one-letter code: Anhydro-N-acetylmuramic acid kinase (376 aa).

11-18 is a binding site for ATP; that stretch reads GTSMDGVD.

This sequence belongs to the anhydro-N-acetylmuramic acid kinase family.

The catalysed reaction is 1,6-anhydro-N-acetyl-beta-muramate + ATP + H2O = N-acetyl-D-muramate 6-phosphate + ADP + H(+). The protein operates within amino-sugar metabolism; 1,6-anhydro-N-acetylmuramate degradation. It participates in cell wall biogenesis; peptidoglycan recycling. In terms of biological role, catalyzes the specific phosphorylation of 1,6-anhydro-N-acetylmuramic acid (anhMurNAc) with the simultaneous cleavage of the 1,6-anhydro ring, generating MurNAc-6-P. Is required for the utilization of anhMurNAc either imported from the medium or derived from its own cell wall murein, and thus plays a role in cell wall recycling. The chain is Anhydro-N-acetylmuramic acid kinase from Acinetobacter baylyi (strain ATCC 33305 / BD413 / ADP1).